Consider the following 588-residue polypeptide: Aspartate--tRNA ligase (588 aa).

Glutamate 172 contacts L-aspartate. The tract at residues 196–199 is aspartate; it reads QLFK. Residue arginine 218 coordinates L-aspartate. ATP-binding positions include 218–220 and glutamine 227; that span reads RDE. Histidine 449 contacts L-aspartate. Position 483 (glutamate 483) interacts with ATP. Arginine 490 contacts L-aspartate. 535–538 contributes to the ATP binding site; that stretch reads GLDR.

Belongs to the class-II aminoacyl-tRNA synthetase family. Type 1 subfamily. Homodimer.

Its subcellular location is the cytoplasm. It carries out the reaction tRNA(Asp) + L-aspartate + ATP = L-aspartyl-tRNA(Asp) + AMP + diphosphate. Its function is as follows. Catalyzes the attachment of L-aspartate to tRNA(Asp) in a two-step reaction: L-aspartate is first activated by ATP to form Asp-AMP and then transferred to the acceptor end of tRNA(Asp). The chain is Aspartate--tRNA ligase from Haemophilus influenzae (strain 86-028NP).